The chain runs to 591 residues: Aspartate--tRNA ligase (591 aa).

Glutamate 173 serves as a coordination point for L-aspartate. Residues 197-200 form an aspartate region; that stretch reads QLFK. Arginine 219 provides a ligand contact to L-aspartate. Residues 219–221 and glutamine 228 contribute to the ATP site; that span reads RDE. Residue histidine 448 participates in L-aspartate binding. ATP is bound at residue glutamate 482. L-aspartate is bound at residue arginine 489. 534–537 is an ATP binding site; sequence GLDR.

It belongs to the class-II aminoacyl-tRNA synthetase family. Type 1 subfamily. As to quaternary structure, homodimer.

Its subcellular location is the cytoplasm. The enzyme catalyses tRNA(Asp) + L-aspartate + ATP = L-aspartyl-tRNA(Asp) + AMP + diphosphate. Catalyzes the attachment of L-aspartate to tRNA(Asp) in a two-step reaction: L-aspartate is first activated by ATP to form Asp-AMP and then transferred to the acceptor end of tRNA(Asp). The polypeptide is Aspartate--tRNA ligase (Shewanella amazonensis (strain ATCC BAA-1098 / SB2B)).